Reading from the N-terminus, the 237-residue chain is Large ribosomal subunit protein uL1 (237 aa).

It belongs to the universal ribosomal protein uL1 family. As to quaternary structure, part of the 50S ribosomal subunit.

Binds directly to 23S rRNA. The L1 stalk is quite mobile in the ribosome, and is involved in E site tRNA release. Its function is as follows. Protein L1 is also a translational repressor protein, it controls the translation of the L11 operon by binding to its mRNA. The protein is Large ribosomal subunit protein uL1 of Dehalococcoides mccartyi (strain ATCC BAA-2266 / KCTC 15142 / 195) (Dehalococcoides ethenogenes (strain 195)).